Consider the following 160-residue polypeptide: Nucleotide-binding protein Ping_2261 (160 aa).

Belongs to the YajQ family.

Nucleotide-binding protein. In Psychromonas ingrahamii (strain DSM 17664 / CCUG 51855 / 37), this protein is Nucleotide-binding protein Ping_2261.